The following is a 232-amino-acid chain: MFSNAFTEKAVMAELVAKMLWEIKAVHFRADEPYKLSSGMASPVYIDCRKLISYPRIRSAVMDFAAATILREAGFEQFDVVAGGETAGIPFAAMLAERLGLPMIYVRKAPKGHGRNAQIEGNMPEGARVLVIEDLTTAGGSMFKFIDAIRAAGGMVEHGIALFYYDIFPEARGDMKSKGVDLHFIATWRNVLSVARELALFDDKTLNEVEAFLDAPLAWSAKNGGVGALADR.

5-phospho-alpha-D-ribose 1-diphosphate is bound by residues arginine 107, lysine 108, lysine 111, histidine 113, and 133–141 (EDLTTAGGS). Residue threonine 137 coordinates orotate.

Belongs to the purine/pyrimidine phosphoribosyltransferase family. PyrE subfamily. As to quaternary structure, homodimer. It depends on Mg(2+) as a cofactor.

The enzyme catalyses orotidine 5'-phosphate + diphosphate = orotate + 5-phospho-alpha-D-ribose 1-diphosphate. Its pathway is pyrimidine metabolism; UMP biosynthesis via de novo pathway; UMP from orotate: step 1/2. Its function is as follows. Catalyzes the transfer of a ribosyl phosphate group from 5-phosphoribose 1-diphosphate to orotate, leading to the formation of orotidine monophosphate (OMP). The polypeptide is Orotate phosphoribosyltransferase (Sinorhizobium medicae (strain WSM419) (Ensifer medicae)).